Here is a 149-residue protein sequence, read N- to C-terminus: Hut operon positive regulatory protein (149 aa).

The protein belongs to the HutP family. As to quaternary structure, homohexamer.

Its function is as follows. Antiterminator that binds to cis-acting regulatory sequences on the mRNA in the presence of histidine, thereby suppressing transcription termination and activating the hut operon for histidine utilization. This chain is Hut operon positive regulatory protein, found in Geobacillus sp. (strain WCH70).